A 260-amino-acid polypeptide reads, in one-letter code: Methylphosphonate hydroxylase (260 aa).

K107 is a 2-oxoglutarate binding site. Fe cation is bound by residues H117, D119, and H195.

Belongs to the PhyH family. Fe(2+) is required as a cofactor.

The enzyme catalyses methylphosphonate + 2-oxoglutarate + O2 = hydroxymethylphosphonate + succinate + CO2. In terms of biological role, part of an oxidative pathway for utilization of methylphosphonic acid as a phosphate source. Catalyzes the conversion of methylphosphonic acid to hydroxymethylphosphonic acid. Is specific for the hydroxylation of methylphosphonate. The polypeptide is Methylphosphonate hydroxylase (Gimesia maris (strain ATCC 29201 / DSM 8797 / 534-30) (Planctomyces maris)).